The sequence spans 152 residues: Ribosomal RNA large subunit methyltransferase H (152 aa).

S-adenosyl-L-methionine-binding positions include Leu71, Gly101, and 120–125 (LSKLTF).

It belongs to the RNA methyltransferase RlmH family. As to quaternary structure, homodimer.

It is found in the cytoplasm. The enzyme catalyses pseudouridine(1915) in 23S rRNA + S-adenosyl-L-methionine = N(3)-methylpseudouridine(1915) in 23S rRNA + S-adenosyl-L-homocysteine + H(+). Functionally, specifically methylates the pseudouridine at position 1915 (m3Psi1915) in 23S rRNA. The chain is Ribosomal RNA large subunit methyltransferase H from Thermosipho melanesiensis (strain DSM 12029 / CIP 104789 / BI429).